The sequence spans 378 residues: Erythronate-4-phosphate dehydrogenase (378 aa).

2 residues coordinate substrate: Ser-45 and Thr-66. NAD(+) is bound by residues Asp-146 and Thr-175. Arg-208 is a catalytic residue. An NAD(+)-binding site is contributed by Asp-232. The active site involves Glu-237. His-254 functions as the Proton donor in the catalytic mechanism. Residue Gly-257 participates in NAD(+) binding. Tyr-258 contacts substrate.

Belongs to the D-isomer specific 2-hydroxyacid dehydrogenase family. PdxB subfamily. Homodimer.

Its subcellular location is the cytoplasm. It catalyses the reaction 4-phospho-D-erythronate + NAD(+) = (R)-3-hydroxy-2-oxo-4-phosphooxybutanoate + NADH + H(+). Its pathway is cofactor biosynthesis; pyridoxine 5'-phosphate biosynthesis; pyridoxine 5'-phosphate from D-erythrose 4-phosphate: step 2/5. In terms of biological role, catalyzes the oxidation of erythronate-4-phosphate to 3-hydroxy-2-oxo-4-phosphonooxybutanoate. This chain is Erythronate-4-phosphate dehydrogenase, found in Cronobacter sakazakii (strain ATCC BAA-894) (Enterobacter sakazakii).